A 229-amino-acid chain; its full sequence is Cytochrome c oxidase subunit 2 (229 aa).

At 1 to 26 (MSTWANLGLQDSASPLMEQLIFFHDH) the chain is on the mitochondrial intermembrane side. Residues 27 to 48 (ALLILVMITVLVGYLMFMLFFN) traverse the membrane as a helical segment. The Mitochondrial matrix segment spans residues 49–62 (SYVNRFLLHGQLIE). The helical transmembrane segment at 63–82 (MIWTILPAIILLFIAMPSLR) threads the bilayer. At 83–229 (LLYLLDEINE…IKWISNSVNS (147 aa)) the chain is on the mitochondrial intermembrane side. Residues His-161, Cys-196, Glu-198, Cys-200, His-204, and Met-207 each contribute to the Cu cation site. Glu-198 contacts Mg(2+).

The protein belongs to the cytochrome c oxidase subunit 2 family. As to quaternary structure, component of the cytochrome c oxidase (complex IV, CIV), a multisubunit enzyme composed of a catalytic core of 3 subunits and several supernumerary subunits. The complex exists as a monomer or a dimer and forms supercomplexes (SCs) in the inner mitochondrial membrane with ubiquinol-cytochrome c oxidoreductase (cytochrome b-c1 complex, complex III, CIII). Requires Cu cation as cofactor.

The protein resides in the mitochondrion inner membrane. It carries out the reaction 4 Fe(II)-[cytochrome c] + O2 + 8 H(+)(in) = 4 Fe(III)-[cytochrome c] + 2 H2O + 4 H(+)(out). Functionally, component of the cytochrome c oxidase, the last enzyme in the mitochondrial electron transport chain which drives oxidative phosphorylation. The respiratory chain contains 3 multisubunit complexes succinate dehydrogenase (complex II, CII), ubiquinol-cytochrome c oxidoreductase (cytochrome b-c1 complex, complex III, CIII) and cytochrome c oxidase (complex IV, CIV), that cooperate to transfer electrons derived from NADH and succinate to molecular oxygen, creating an electrochemical gradient over the inner membrane that drives transmembrane transport and the ATP synthase. Cytochrome c oxidase is the component of the respiratory chain that catalyzes the reduction of oxygen to water. Electrons originating from reduced cytochrome c in the intermembrane space (IMS) are transferred via the dinuclear copper A center (CU(A)) of subunit 2 and heme A of subunit 1 to the active site in subunit 1, a binuclear center (BNC) formed by heme A3 and copper B (CU(B)). The BNC reduces molecular oxygen to 2 water molecules using 4 electrons from cytochrome c in the IMS and 4 protons from the mitochondrial matrix. In Drosophila ambigua (Fruit fly), this protein is Cytochrome c oxidase subunit 2 (mt:CoII).